Reading from the N-terminus, the 438-residue chain is Putative F-box/FBD/LRR-repeat protein At2g05300 (438 aa).

Positions 13–59 constitute an F-box domain; it reads EDRISQLPDPLLTQILNLLPTEEAVKTSVLSTRWRTLWLWVPNLELS. LRR repeat units lie at residues 135–166, 167–192, 235–261, and 318–346; these read CDSL…RLKD, IVFH…KIDV, CLII…DISL, and YVTL…ILER. Residues 362–409 form the FBD domain; that stretch reads SMSSVPECLLTSLEFVEFKAPICGLGPEMMLVWYFLKNSPTLKKLTLP.

The sequence is that of Putative F-box/FBD/LRR-repeat protein At2g05300 from Arabidopsis thaliana (Mouse-ear cress).